Reading from the N-terminus, the 276-residue chain is Large ribosomal subunit protein uL2 (276 aa).

The tract at residues 224-276 is disordered; the sequence is AMNPIDHPHGGGEGKTSGGRNPVTPWGVPTKGKKTRKRNKSSNKYIKRVSDKG. Residues 254–270 are compositionally biased toward basic residues; that stretch reads KGKKTRKRNKSSNKYIK.

This sequence belongs to the universal ribosomal protein uL2 family. Part of the 50S ribosomal subunit. Forms a bridge to the 30S subunit in the 70S ribosome.

One of the primary rRNA binding proteins. Required for association of the 30S and 50S subunits to form the 70S ribosome, for tRNA binding and peptide bond formation. It has been suggested to have peptidyltransferase activity; this is somewhat controversial. Makes several contacts with the 16S rRNA in the 70S ribosome. The protein is Large ribosomal subunit protein uL2 of Ehrlichia chaffeensis (strain ATCC CRL-10679 / Arkansas).